A 306-amino-acid polypeptide reads, in one-letter code: Pantothenate kinase (306 aa).

Position 90–97 (90–97 (GSVAVGKS)) interacts with ATP.

It belongs to the prokaryotic pantothenate kinase family.

The protein localises to the cytoplasm. It carries out the reaction (R)-pantothenate + ATP = (R)-4'-phosphopantothenate + ADP + H(+). It functions in the pathway cofactor biosynthesis; coenzyme A biosynthesis; CoA from (R)-pantothenate: step 1/5. The sequence is that of Pantothenate kinase from Ligilactobacillus salivarius (strain UCC118) (Lactobacillus salivarius).